We begin with the raw amino-acid sequence, 2464 residues long: Highly reducing polyketide synthase xilA (2464 aa).

The Ketosynthase family 3 (KS3) domain occupies 9–437 (HDPIALVGIG…GTNGHCIIDH (429 aa)). Catalysis depends on for beta-ketoacyl synthase activity residues Cys-182, His-318, and His-360. Residues 461–487 (QNGINGTNGTNGTNGTNGTNGTNGTNG) are compositionally biased toward low complexity. The disordered stretch occupies residues 461-495 (QNGINGTNGTNGTNGTNGTNGTNGTNGHHNPKTEA). In terms of domain architecture, Malonyl-CoA:ACP transacylase (MAT) spans 589-911 (FIFTGQGAQW…LKRNEDAQRL (323 aa)). The segment at 983–1121 (HDLLGSKVPG…GQIKIEVSTF (139 aa)) is N-terminal hotdog fold. Positions 983-1286 (HDLLGSKVPG…FTSLNNEQES (304 aa)) constitute a PKS/mFAS DH domain. The Proton acceptor; for dehydratase activity role is filled by His-1015. Residues 1133–1286 (GRLVDAQTWY…FTSLNNEQES (154 aa)) are C-terminal hotdog fold. Asp-1199 functions as the Proton donor; for dehydratase activity in the catalytic mechanism. Residues 1282–1490 (NEQESTSTGD…TEPAHHSTIT (209 aa)) are methyltransferase (CMeT) domain. The Enoyl reductase (ER) domain maps to 1716 to 2028 (GILTSLYFKP…KGTHIGKMVI (313 aa)). One can recognise a Ketoreductase (KR) domain in the interval 2052–2231 (ANYILVGGMS…ATTVSLGFIN (180 aa)). Residues 2383–2461 (ETVTFVTDAI…SIAQVIVEEA (79 aa)) enclose the Carrier domain. Position 2420 is an O-(pantetheine 4'-phosphoryl)serine (Ser-2420).

It depends on pantetheine 4'-phosphate as a cofactor.

The protein operates within secondary metabolite biosynthesis. Functionally, highly reducing polyketide synthase; part of the gene cluster that mediates the biosynthesis of the 6-methyl-2-pyrone derivative xylariolide D. XilA produces the 5-alkyl-6-methyl-2-pyrone backbone called prexylariolide D via sequential condensations of 4 malonyl-CoA units with one acetyl-CoA starter unit. During the biosynthesis, the linear polyketide chain is branched by the addition of an acetyl unit as the origin of the methyl group at the 2-pyrone ring. Prexylariolide D is then hydroxylated at the side chain by xilC to form the final product, xylariolide D. In Penicillium rubens (strain ATCC 28089 / DSM 1075 / NRRL 1951 / Wisconsin 54-1255) (Penicillium chrysogenum), this protein is Highly reducing polyketide synthase xilA.